Consider the following 595-residue polypeptide: GPI mannosyltransferase 3 (595 aa).

10 helical membrane-spanning segments follow: residues 58–78 (YAFP…GVAT), 85–105 (LAHA…GVAA), 128–148 (GPRV…VLLV), 185–207 (FFAT…LYHW), 212–232 (GLDV…FACL), 235–255 (PTNV…LVRS), 260–280 (LLLT…CANI), 289–309 (GVLL…LAAF), 319–339 (LLQS…GALL), and 413–433 (VQSL…VLNT).

It belongs to the glycosyltransferase 22 family. PIGB subfamily.

The protein resides in the endoplasmic reticulum membrane. It participates in glycolipid biosynthesis; glycosylphosphatidylinositol-anchor biosynthesis. Functionally, mannosyltransferase involved in glycosylphosphatidylinositol-anchor biosynthesis. Transfers the third mannose to Man2-GlcN-acyl-PI during GPI precursor assembly. This is GPI mannosyltransferase 3 (GPI10) from Eremothecium gossypii (strain ATCC 10895 / CBS 109.51 / FGSC 9923 / NRRL Y-1056) (Yeast).